The primary structure comprises 962 residues: Glycine dehydrogenase (decarboxylating) (962 aa).

K709 carries the post-translational modification N6-(pyridoxal phosphate)lysine.

It belongs to the GcvP family. The glycine cleavage system is composed of four proteins: P, T, L and H. Pyridoxal 5'-phosphate serves as cofactor.

It catalyses the reaction N(6)-[(R)-lipoyl]-L-lysyl-[glycine-cleavage complex H protein] + glycine + H(+) = N(6)-[(R)-S(8)-aminomethyldihydrolipoyl]-L-lysyl-[glycine-cleavage complex H protein] + CO2. Functionally, the glycine cleavage system catalyzes the degradation of glycine. The P protein binds the alpha-amino group of glycine through its pyridoxal phosphate cofactor; CO(2) is released and the remaining methylamine moiety is then transferred to the lipoamide cofactor of the H protein. The protein is Glycine dehydrogenase (decarboxylating) of Shewanella baltica (strain OS155 / ATCC BAA-1091).